Consider the following 351-residue polypeptide: Tropomodulin-2 (351 aa).

Ser25 bears the Phosphoserine mark.

This sequence belongs to the tropomodulin family. Binds to the N-terminus of tropomyosin and to actin. As to expression, neuronal-tissue specific.

Its subcellular location is the cytoplasm. The protein resides in the cytoskeleton. Functionally, blocks the elongation and depolymerization of the actin filaments at the pointed end. The Tmod/TM complex contributes to the formation of the short actin protofilament, which in turn defines the geometry of the membrane skeleton. The polypeptide is Tropomodulin-2 (TMOD2) (Homo sapiens (Human)).